Reading from the N-terminus, the 97-residue chain is Aspartyl/glutamyl-tRNA(Asn/Gln) amidotransferase subunit C (97 aa).

The segment at 74–97 (AEQALDQAPASQRDRFEVPRILGE) is disordered. The segment covering 85–97 (QRDRFEVPRILGE) has biased composition (basic and acidic residues).

It belongs to the GatC family. As to quaternary structure, heterotrimer of A, B and C subunits.

The enzyme catalyses L-glutamyl-tRNA(Gln) + L-glutamine + ATP + H2O = L-glutaminyl-tRNA(Gln) + L-glutamate + ADP + phosphate + H(+). It carries out the reaction L-aspartyl-tRNA(Asn) + L-glutamine + ATP + H2O = L-asparaginyl-tRNA(Asn) + L-glutamate + ADP + phosphate + 2 H(+). Functionally, allows the formation of correctly charged Asn-tRNA(Asn) or Gln-tRNA(Gln) through the transamidation of misacylated Asp-tRNA(Asn) or Glu-tRNA(Gln) in organisms which lack either or both of asparaginyl-tRNA or glutaminyl-tRNA synthetases. The reaction takes place in the presence of glutamine and ATP through an activated phospho-Asp-tRNA(Asn) or phospho-Glu-tRNA(Gln). This chain is Aspartyl/glutamyl-tRNA(Asn/Gln) amidotransferase subunit C, found in Corynebacterium kroppenstedtii (strain DSM 44385 / JCM 11950 / CIP 105744 / CCUG 35717).